We begin with the raw amino-acid sequence, 551 residues long: Interleukin-2 receptor subunit beta (551 aa).

The first 26 residues, 1-26 (MATLALSWCLPLLILLLPLATSSASA), serve as a signal peptide directing secretion. Over 27-240 (AVNGTSRFTC…TKPAALGKDT (214 aa)) the chain is Extracellular. Asn-29, Asn-43, and Asn-71 each carry an N-linked (GlcNAc...) asparagine glycan. Residues Cys-36 and Cys-46 are joined by a disulfide bond. A disulfide bridge connects residues Cys-74 and Cys-86. The Fibronectin type-III domain maps to 134 to 234 (APISLQVVHV…QPLAFRTKPA (101 aa)). Asn-149 carries N-linked (GlcNAc...) asparagine glycosylation. The WSXWS motif signature appears at 220–224 (WSPWS). The helical transmembrane segment at 241–265 (IPWLGHLLVGLSGAFGFIILVYLLI) threads the bilayer. The Cytoplasmic segment spans residues 266–551 (NCRNTGPWLK…LQDQDPTHLV (286 aa)). The Box 1 motif motif lies at 278–286 (LKCHTPDPS). Disordered stretches follow at residues 389–417 (EEEP…EDDA), 430–484 (FSPS…DLVD), and 496–517 (AGEQ…ARPP).

Belongs to the type I cytokine receptor family. Type 4 subfamily. In terms of assembly, non-covalent dimer of an alpha and a beta subunit. IL2R exists in 3 different forms: a high affinity dimer, an intermediate affinity monomer (beta subunit), and a low affinity monomer (alpha subunit). The high and intermediate affinity forms also associate with a gamma subunit. Interacts with SHB upon interleukin stimulation.

The protein localises to the cell membrane. It localises to the cell surface. In terms of biological role, receptor for interleukin-2. This beta subunit is involved in receptor mediated endocytosis and transduces the mitogenic signals of IL2. Probably in association with IL15RA, involved in the stimulation of neutrophil phagocytosis by IL15. The sequence is that of Interleukin-2 receptor subunit beta (IL2RB) from Macaca fascicularis (Crab-eating macaque).